The sequence spans 278 residues: Undecaprenyl-diphosphatase 2 (278 aa).

Transmembrane regions (helical) follow at residues 43-63 (GAAF…VYFW), 88-108 (ARLG…GLFF), 119-139 (LYIT…ADRI), 149-169 (LIWR…IPGV), 194-214 (FLLA…KSIG), 226-246 (LATL…LKLV), and 254-274 (FVWY…TGVI).

This sequence belongs to the UppP family.

The protein localises to the cell inner membrane. The enzyme catalyses di-trans,octa-cis-undecaprenyl diphosphate + H2O = di-trans,octa-cis-undecaprenyl phosphate + phosphate + H(+). In terms of biological role, catalyzes the dephosphorylation of undecaprenyl diphosphate (UPP). Confers resistance to bacitracin. This chain is Undecaprenyl-diphosphatase 2, found in Agrobacterium fabrum (strain C58 / ATCC 33970) (Agrobacterium tumefaciens (strain C58)).